The chain runs to 508 residues: BICD family-like cargo adapter 2 (508 aa).

The span at 1–22 shows a compositional bias: low complexity; it reads MSSPDGPSFPSGPLSGGASPSG. Disordered regions lie at residues 1 to 27, 132 to 152, and 300 to 351; these read MSSP…EGFF, LGEQ…ALSE, and AHSL…TSLS. Coiled coils occupy residues 64–300 and 353–458; these read AAEL…SELA and AEIL…DMQV. Residues 135–149 show a composition bias toward basic and acidic residues; sequence QRSEQQDSGRERARA. The interval 470–491 is disordered; the sequence is KELSASASSSTPRRAAPRFSLR. Over residues 473 to 489 the composition is skewed to low complexity; that stretch reads SASASSSTPRRAAPRFS.

The protein belongs to the BICDR family. Interacts with RAB13.

The sequence is that of BICD family-like cargo adapter 2 (BICDL2) from Homo sapiens (Human).